The following is a 246-amino-acid chain: Protein DEHYDRATION-INDUCED 19 homolog 3 (246 aa).

The disordered stretch occupies residues 185-230 (ERSKAPVPIPDDTSIHKDTPAQPWESRIDSSLTSEEREQKRKQATD). The segment covering 218 to 229 (SEEREQKRKQAT) has biased composition (basic and acidic residues).

The protein belongs to the Di19 family.

This chain is Protein DEHYDRATION-INDUCED 19 homolog 3 (DI19-3), found in Oryza sativa subsp. japonica (Rice).